The following is a 488-amino-acid chain: Ribulose bisphosphate carboxylase large chain (488 aa).

Asparagine 127 and threonine 177 together coordinate substrate. Residue lysine 179 is the Proton acceptor of the active site. Lysine 181 is a substrate binding site. Lysine 205, aspartate 207, and glutamate 208 together coordinate Mg(2+). N6-carboxylysine is present on lysine 205. The active-site Proton acceptor is the histidine 297. Arginine 298, histidine 330, and serine 382 together coordinate substrate.

This sequence belongs to the RuBisCO large chain family. Type I subfamily. As to quaternary structure, heterohexadecamer of 8 large chains and 8 small chains. It depends on Mg(2+) as a cofactor.

The protein resides in the plastid. The protein localises to the chloroplast. The enzyme catalyses 2 (2R)-3-phosphoglycerate + 2 H(+) = D-ribulose 1,5-bisphosphate + CO2 + H2O. It carries out the reaction D-ribulose 1,5-bisphosphate + O2 = 2-phosphoglycolate + (2R)-3-phosphoglycerate + 2 H(+). RuBisCO catalyzes two reactions: the carboxylation of D-ribulose 1,5-bisphosphate, the primary event in carbon dioxide fixation, as well as the oxidative fragmentation of the pentose substrate in the photorespiration process. Both reactions occur simultaneously and in competition at the same active site. This chain is Ribulose bisphosphate carboxylase large chain, found in Pyropia yezoensis (Susabi-nori).